We begin with the raw amino-acid sequence, 286 residues long: 3-methyl-2-oxobutanoate hydroxymethyltransferase (286 aa).

Mg(2+) is bound by residues Asp67 and Asp106. Residues 67–68 (DS), Asp106, and Lys136 each bind 3-methyl-2-oxobutanoate. Residue Glu138 coordinates Mg(2+). Glu204 serves as the catalytic Proton acceptor.

It belongs to the PanB family. Homodecamer; pentamer of dimers. Mg(2+) is required as a cofactor.

It is found in the cytoplasm. The catalysed reaction is 3-methyl-2-oxobutanoate + (6R)-5,10-methylene-5,6,7,8-tetrahydrofolate + H2O = 2-dehydropantoate + (6S)-5,6,7,8-tetrahydrofolate. It participates in cofactor biosynthesis; (R)-pantothenate biosynthesis; (R)-pantoate from 3-methyl-2-oxobutanoate: step 1/2. Catalyzes the reversible reaction in which hydroxymethyl group from 5,10-methylenetetrahydrofolate is transferred onto alpha-ketoisovalerate to form ketopantoate. In Mycobacterium leprae (strain TN), this protein is 3-methyl-2-oxobutanoate hydroxymethyltransferase.